Consider the following 473-residue polypeptide: Glutamyl-tRNA reductase (473 aa).

Substrate contacts are provided by residues 49 to 52 (TCNR), serine 109, 114 to 116 (EHQ), and glutamine 120. Cysteine 50 (nucleophile) is an active-site residue. 189–194 (GAGAMA) is a binding site for NADP(+). Positions 422–473 (VAISAPQPSTDSPARAAYQPTDEAATDAEPRRDDAEPPSAAAAQDAGRESRP) are disordered.

It belongs to the glutamyl-tRNA reductase family. Homodimer.

The catalysed reaction is (S)-4-amino-5-oxopentanoate + tRNA(Glu) + NADP(+) = L-glutamyl-tRNA(Glu) + NADPH + H(+). It functions in the pathway porphyrin-containing compound metabolism; protoporphyrin-IX biosynthesis; 5-aminolevulinate from L-glutamyl-tRNA(Glu): step 1/2. Catalyzes the NADPH-dependent reduction of glutamyl-tRNA(Glu) to glutamate 1-semialdehyde (GSA). The polypeptide is Glutamyl-tRNA reductase (Acidothermus cellulolyticus (strain ATCC 43068 / DSM 8971 / 11B)).